The sequence spans 857 residues: Blue light receptor lreA (857 aa).

PAS domains are found at residues 306–328 (IIYV…VGQN), 479–542 (LVEN…TTTD), and 608–642 (LSKS…DLMD). Residues 811–836 (CAICQTKKTPEWRRGPSGERDLCNSC) form a GATA-type zinc finger.

Transcription factor that acts as a blue light sensor. Plays crucial roles in fungal growth and asexual development. Involved in conidiophore formation, sclerotium production, and conidial stress tolerance. Promotes conidiation by inducing the expression of brlA and abaA. Positively regulates the fungal pathogenicity towards maize. In blue light conditions, inhibits aflatoxin B1 (AFB1) biosynthesis by down-regulating the expression of key genes such as aflA, aflJ, aflH, aflO and aflK. In Aspergillus flavus, this protein is Blue light receptor lreA.